Reading from the N-terminus, the 725-residue chain is Kinesin-like protein KIF2C (725 aa).

N-acetylalanine is present on Ala2. Residues 2-254 (AMDSSLQARL…CHPLTMTDPI (253 aa)) are globular. Phosphoserine occurs at positions 6 and 22. The segment at 89-116 (QKQKRRSVNSKIPAPKESLRSRSTRMST) is disordered. Ser95 carries the post-translational modification Phosphoserine; by AURKB. The Microtubule tip localization signal signature appears at 98–101 (SKIP). Phosphoserine is present on residues Ser106, Ser109, Ser111, Ser115, Ser166, Ser175, Ser187, and Ser192. The tract at residues 207–238 (EKKAQNSEMRMKRAQEYDSSFPNWEFARMIKE) is negative regulator of microtubule-binding. The region spanning 258-588 (RICVCVRKRP…LRYADRVKEL (331 aa)) is the Kinesin motor domain. ATP contacts are provided by residues Arg264 and 348-355 (GQTGSGKT). Positions 415–418 (KKAK) match the Nuclear localization signal motif. 3 positions are modified to phosphoserine: Ser519, Ser621, and Ser633. Residues 618–658 (GNLSKEEEELSSQMSSFNEAMTQIRELEEKAMEELKEIIQQ) adopt a coiled-coil conformation.

It belongs to the TRAFAC class myosin-kinesin ATPase superfamily. Kinesin family. MCAK/KIF2 subfamily. Interacts with CENPH. Interacts with MTUS2/TIP150; the interaction is direct. Interacts with MAPRE1; the interaction is direct, regulated by phosphorylation and is probably required for targeting to growing microtubule plus ends. Interacts with KIF18B at microtubule tips; this interaction increases the affinity of both partners for microtubule plus ends and is required for robust microtubule depolymerization. Phosphorylation by AURKA or AURKB strongly reduces KIF18B-binding. Post-translationally, phosphorylation by AURKB, regulates association with centromeres and kinetochores and the microtubule depolymerization activity. In terms of processing, ubiquitinated. In terms of tissue distribution, expressed at high levels in thymus and testis, at low levels in small intestine, the mucosal lining of colon, and placenta, and at very low levels in spleen and ovary; expression is not detected in prostate, peripheral blood Leukocytes, heart, brain, lung, liver, skeletal muscle, kidney or pancreas. Isoform 2 is testis-specific.

Its subcellular location is the cytoplasm. It localises to the cytoskeleton. It is found in the nucleus. The protein localises to the chromosome. The protein resides in the centromere. Its subcellular location is the kinetochore. Its function is as follows. In complex with KIF18B, constitutes the major microtubule plus-end depolymerizing activity in mitotic cells. Regulates the turnover of microtubules at the kinetochore and functions in chromosome segregation during mitosis. Plays a role in chromosome congression and is required for the lateral to end-on conversion of the chromosome-microtubule attachment. The protein is Kinesin-like protein KIF2C (KIF2C) of Homo sapiens (Human).